Reading from the N-terminus, the 213-residue chain is UPF0301 protein RPC_0788 (213 aa).

Residues 1-20 form a disordered region; the sequence is MDPKSKAPKRDETKGADDAS.

This sequence belongs to the UPF0301 (AlgH) family.

The protein is UPF0301 protein RPC_0788 of Rhodopseudomonas palustris (strain BisB18).